We begin with the raw amino-acid sequence, 521 residues long: GMP synthase [glutamine-hydrolyzing] (521 aa).

Residues 5 to 203 (KILILDFGSQ…VHEICGCGRD (199 aa)) enclose the Glutamine amidotransferase type-1 domain. The active-site Nucleophile is C82. Catalysis depends on residues H177 and E179. Positions 204 to 396 (WNMPDYVNEA…LGLPHEMVYR (193 aa)) constitute a GMPS ATP-PPase domain. An ATP-binding site is contributed by 231–237 (SGGVDSS).

As to quaternary structure, homodimer.

It carries out the reaction XMP + L-glutamine + ATP + H2O = GMP + L-glutamate + AMP + diphosphate + 2 H(+). It participates in purine metabolism; GMP biosynthesis; GMP from XMP (L-Gln route): step 1/1. In terms of biological role, catalyzes the synthesis of GMP from XMP. The polypeptide is GMP synthase [glutamine-hydrolyzing] (Aromatoleum aromaticum (strain DSM 19018 / LMG 30748 / EbN1) (Azoarcus sp. (strain EbN1))).